A 281-amino-acid polypeptide reads, in one-letter code: UPF0273 protein PAE3143 (281 aa).

In terms of domain architecture, KaiC spans 4–248 (PRVRSYVPGL…YIKITGSSVR (245 aa)). 31–38 (GGPGTGKS) lines the ATP pocket.

Belongs to the UPF0273 family.

This chain is UPF0273 protein PAE3143, found in Pyrobaculum aerophilum (strain ATCC 51768 / DSM 7523 / JCM 9630 / CIP 104966 / NBRC 100827 / IM2).